A 102-amino-acid chain; its full sequence is Small ribosomal subunit protein eS24 (102 aa).

This sequence belongs to the eukaryotic ribosomal protein eS24 family.

The sequence is that of Small ribosomal subunit protein eS24 from Methanococcoides burtonii (strain DSM 6242 / NBRC 107633 / OCM 468 / ACE-M).